A 174-amino-acid chain; its full sequence is Transgelin (174 aa).

In terms of domain architecture, Calponin-homology (CH) spans 3 to 109 (SQLEKEAREW…SIHSFSRYAA (107 aa)).

As to quaternary structure, binds to actin.

It is found in the cytoplasm. Has actin-binding and actin-bundling activity and is a component of the actin patch. Stabilizes actin filaments against disassembly. Cross-links F-actin and is required for the formation of the contractile F-actin ring. The protein is Transgelin (stg1) of Schizosaccharomyces pombe (strain 972 / ATCC 24843) (Fission yeast).